The sequence spans 447 residues: Delta(5) fatty acid desaturase fat-4 (447 aa).

The region spanning 1–80 (MVLREQEHEP…TQEPEIPDIK (80 aa)) is the Cytochrome b5 heme-binding domain. A run of 4 helical transmembrane segments spans residues 137–157 (IFTI…PSAI), 257–277 (WTFM…IFVS), 292–312 (IYEQ…LYFL), and 319–339 (IMFF…VVTF).

Belongs to the fatty acid desaturase type 1 family.

Its subcellular location is the membrane. It catalyses the reaction (11Z,14Z)-eicosadienoyl-CoA + 2 Fe(II)-[cytochrome b5] + O2 + 2 H(+) = (5Z,11Z,14Z)-eicosatrienoyl-CoA + 2 Fe(III)-[cytochrome b5] + 2 H2O. It carries out the reaction (11Z,14Z,17Z)-eicosatrienoyl-CoA + 2 Fe(II)-[cytochrome b5] + O2 + 2 H(+) = (5Z,11Z,14Z,17Z)-eicosatetraenoyl-CoA + 2 Fe(III)-[cytochrome b5] + 2 H2O. The enzyme catalyses (8Z,11Z,14Z,17Z)-eicosatetraenoyl-CoA + 2 Fe(II)-[cytochrome b5] + O2 + 2 H(+) = (5Z,8Z,11Z,14Z,17Z)-eicosapentaenoyl-CoA + 2 Fe(III)-[cytochrome b5] + 2 H2O. The catalysed reaction is (8Z,11Z,14Z)-eicosatrienoyl-CoA + 2 Fe(II)-[cytochrome b5] + O2 + 2 H(+) = (5Z,8Z,11Z,14Z)-eicosatetraenoyl-CoA + 2 Fe(III)-[cytochrome b5] + 2 H2O. It participates in lipid metabolism; polyunsaturated fatty acid biosynthesis. In terms of biological role, can function as a Delta(5) fatty acid desaturase and behaves as a (8-3) desaturase. Introduces a double bond in the fatty acid chain 5 carbons away from carboxy terminal to biosynthesize polyunsaturated fatty acids (PUFAs) endogenously (PUFAs are essential for membrane structure and many cellular and physiological processes). Acts on a variety of substrates such as dihomo-gamma-linoleoyl-CoA ((8Z,11Z,14Z)-eicosatrienoyl-CoA, 20:3n-6) to generate arachidonoyl-CoA ((5Z,8Z,11Z,14Z)-eicosatetraenoyl-CoA, 20:4n-6). Also acts on a number of other substrates, including fatty acids that do not contain a double bond at the 8 position like (11Z,14Z,17Z)-eicosatrienoyl-CoA (20:3n-3) to produce (5Z,11Z,14Z,17Z)-eicosatetraenoyl-CoA (20:4n-3). Unlike plants, Caenorhabditis elegans desaturases seem to use fatty acyl-CoAs as substrates. This Caenorhabditis elegans protein is Delta(5) fatty acid desaturase fat-4 (fat-4).